Here is a 461-residue protein sequence, read N- to C-terminus: Ufm1-specific protease 2 (461 aa).

Active-site residues include C294, D418, and H420.

Belongs to the peptidase C78 family.

It localises to the endoplasmic reticulum. Its subcellular location is the cytoplasm. The protein resides in the nucleus. In terms of biological role, thiol-dependent isopeptidase that specifically cleaves UFM1, a ubiquitin-like modifier protein, from conjugated proteins, such as CD274/PD-L1, CYB5R3, DDRGK1, MRE11, RPL26/uL24, TRIP4 and RPL26/uL24. While it is also able to mediate the processing of UFM1 precursors, a prerequisite for conjugation reactions, UFSP2 mainly acts as a protein deUFMylase that mediates deconjugation of UFM1 from target proteins. Mediates deUFMylation of RPL26/uL24, a critical step to release the UFM1 ribosome E3 ligase (UREL) complex during the recycling of 60S ribosome subunits from the endoplasmic reticulum. Catalyzes deUFMylation of TRIP4, regulating intracellular nuclear receptors transactivation and thereby regulate cell proliferation and differentiation. The chain is Ufm1-specific protease 2 from Rattus norvegicus (Rat).